The primary structure comprises 201 residues: Small ribosomal subunit protein uS4c (201 aa).

Residues 20–43 (GLTNKRPKSRNDPTNQSSSRKISQ) are disordered. Residues 31-41 (DPTNQSSSRKI) are compositionally biased toward polar residues. Residues 89 to 157 (MRLDNIIFRL…IGKNLDLSQK (69 aa)) enclose the S4 RNA-binding domain.

The protein belongs to the universal ribosomal protein uS4 family. As to quaternary structure, part of the 30S ribosomal subunit. Contacts protein S5. The interaction surface between S4 and S5 is involved in control of translational fidelity.

It localises to the plastid. It is found in the chloroplast. Its function is as follows. One of the primary rRNA binding proteins, it binds directly to 16S rRNA where it nucleates assembly of the body of the 30S subunit. Functionally, with S5 and S12 plays an important role in translational accuracy. The polypeptide is Small ribosomal subunit protein uS4c (rps4) (Cycas taitungensis (Prince sago)).